The primary structure comprises 302 residues: Oxygen-dependent coproporphyrinogen-III oxidase (302 aa).

Residue serine 94 coordinates substrate. The a divalent metal cation site is built by histidine 98 and histidine 108. Histidine 108 serves as the catalytic Proton donor. 110–112 (NVR) contacts substrate. A divalent metal cation-binding residues include histidine 147 and histidine 177. Residues 242-277 (YVEFNLVFDRGTLFGLQSGGRTESILMSMPPVANWR) form an important for dimerization region. 260–262 (GGR) contacts substrate.

This sequence belongs to the aerobic coproporphyrinogen-III oxidase family. As to quaternary structure, homodimer. Requires a divalent metal cation as cofactor.

It localises to the cytoplasm. The enzyme catalyses coproporphyrinogen III + O2 + 2 H(+) = protoporphyrinogen IX + 2 CO2 + 2 H2O. It participates in porphyrin-containing compound metabolism; protoporphyrin-IX biosynthesis; protoporphyrinogen-IX from coproporphyrinogen-III (O2 route): step 1/1. In terms of biological role, involved in the heme biosynthesis. Catalyzes the aerobic oxidative decarboxylation of propionate groups of rings A and B of coproporphyrinogen-III to yield the vinyl groups in protoporphyrinogen-IX. This chain is Oxygen-dependent coproporphyrinogen-III oxidase, found in Ralstonia nicotianae (strain ATCC BAA-1114 / GMI1000) (Ralstonia solanacearum).